The sequence spans 461 residues: MSVRIEHDTFGEIEVPEDKYWGAQTERSKRNFPVGKEHMPIQVIYGFAQLKRGAALANHELGKLSDEKKNAIVYACDRILNGELDNHFPLVIWQTGSGTQSNMNVNEVVSYVANEYLKKHGSKETIHPNDDVNKSQSSNDTFPTAMHVALFHEVETKLEPALNHLRQTFKEKEDQYQSIIKIGRTHLQDATPIKLGQEISGWRYMLEKCEQLLSESKKHILNLAIGGTAVGTGINAHPEFGHKVAKYISQNTGYAFVSSENKFHALTSHDEIVQLHGTLKALATDLMKIANDIRWLASGPRAGLAEISIPENEPGSSIMPGKVNPTQCEMLTMVAVQVMGNDTTVGIASSQGNFELNVFKPVIMHNTLQSIYLLADGMNTFNKNCAIGIQPIEENINNYLNQSLMLVTALNPHIGYEKAAQIAKKAHKEGLTLKESAIESGYVTESQFEEWIKPEDMVDPH.

Residues 97–99 (SGT), 127–130 (HPND), 137–139 (SSN), and Thr-185 each bind substrate. Catalysis depends on His-186, which acts as the Proton donor/acceptor. Ser-316 is an active-site residue. Substrate contacts are provided by residues Ser-317 and 322–324 (KVN).

The protein belongs to the class-II fumarase/aspartase family. Fumarase subfamily. Homotetramer.

Its subcellular location is the cytoplasm. The enzyme catalyses (S)-malate = fumarate + H2O. The protein operates within carbohydrate metabolism; tricarboxylic acid cycle; (S)-malate from fumarate: step 1/1. Functionally, involved in the TCA cycle. Catalyzes the stereospecific interconversion of fumarate to L-malate. This chain is Fumarate hydratase class II, found in Staphylococcus epidermidis (strain ATCC 35984 / DSM 28319 / BCRC 17069 / CCUG 31568 / BM 3577 / RP62A).